The primary structure comprises 1001 residues: MPSTSRAGSLKDQDIAELFFRDDPEKLFSDLREIGHGSFGAVYFAHDASTREVVAIKKMSYSGKQSNEKWQDIVKEVKFLQRIKHPNSIEYKGCYLREHTAWLVMEYCLGSASDLLEVHKKPLQEIEIAAITHGALQGLAYLHSHNLIHRDIKAGNILLTEPGQVKLADFGSASIASPANSFVGTPYWMAPEVILAMDEGQYDGKVDVWSLGITCIELAERKPPLFNMNAMSALYHIAQNESPTLQSNEWSDFFRNFVDSCLQKIPQDRPTSDELLKNMFVLLERPETVLIDLIQRTKDAVRELDNLQYRKMKKLLFQEAHNGPAVETHEEEEEQEHGVGRTGTVNSIGSNQSIPSMSISASSQSSSVTSLPDASDDKSELDMMEGDHTVMSNSSVIHLKPEEENYPEEPEPRTRPSEPHSPPQVSRHKSHYRNREHFATIRTASLVTRQIQEHEQDSELREQMSGYKRMRRQHQKQLMALENKLKAEMDEHRLRLDKDLETQRNNFSAEMEKLVKKHQAAMEKELKSIANDEKKFQQHIQAQQKKELNNFLESQKREYKLRKEQLKEELNENQSTPKKEKQEWLSKQKENFQHFQAEEEANLLRRQRQYLDLECRRFKRRMLLNRHNSEQDLVREELNKRQTQKDLEHAMLLRQHESMQELEFRHLNTIQKMRCELIKLQHQTELTNQLEYNKRRERELRRKHVMEVRQQPKSLKSKELQIKKQFQDTCKIQTRQYKALRNHLLDTTPKNEHKAVLKRLKEEQTRKLAILAEQYDHSINEMLSTQALRLDEAQEAECQVLKMQLQQELELLNAYQSKIKMQAEAQHEREIHELEQRVSLHRGLLEQKIEEEMLALQNERTERIRSLLERQAREIEAFDSESMRLGFSNMILSNLSPEAFSHSYPGASGWSHNPTGGPGPHWGHPMAGPPQAWGHPMQGGPQPWGHPSGSVQGVSRGSTMGVRNSPQALRRTASGGQTEQGMSRSTSVTSQISNGSRMSYT.

The Protein kinase domain maps to 28 to 281 (FSDLREIGHG…SDELLKNMFV (254 aa)). Residues 34-42 (IGHGSFGAV) and K57 contribute to the ATP site. D151 (proton acceptor) is an active-site residue. Disordered regions lie at residues 324-431 (PAVE…HKSH) and 567-586 (KEEL…EWLS). Positions 350–370 (SNQSIPSMSISASSQSSSVTS) are enriched in low complexity. Composition is skewed to basic and acidic residues over residues 375–388 (SDDK…EGDH) and 577–586 (PKKEKQEWLS). Coiled-coil stretches lie at residues 458-651 (SELR…EHAM) and 754-877 (KAVL…EIEA). Residues 911–1001 (SHNPTGGPGP…ISNGSRMSYT (91 aa)) are disordered. Positions 921 to 930 (HWGHPMAGPP) are enriched in low complexity. Polar residues-rich tracts occupy residues 949-967 (GSVQ…NSPQ) and 974-1001 (SGGQ…MSYT).

The protein belongs to the protein kinase superfamily. STE Ser/Thr protein kinase family. STE20 subfamily.

It is found in the cytoplasm. It carries out the reaction L-seryl-[protein] + ATP = O-phospho-L-seryl-[protein] + ADP + H(+). The enzyme catalyses L-threonyl-[protein] + ATP = O-phospho-L-threonyl-[protein] + ADP + H(+). Functionally, serine/threonine-protein kinase involved in various processes such as p38/mapk14 stress-activated MAPK cascade, DNA damage response and regulation of cytoskeleton stability. Acts as an activator of the p38/MAPK14 stress-activated MAPK cascade by mediating phosphorylation and subsequent activation of upstream MAP kinase kinases. In response to DNA damage, involved in the G2/M transition DNA damage checkpoint by activating the p38/MAPK14 stress-activated MAPK cascade. This chain is Serine/threonine-protein kinase TAO1-A (taok1-a), found in Xenopus laevis (African clawed frog).